We begin with the raw amino-acid sequence, 210 residues long: Uracil phosphoribosyltransferase (210 aa).

Residues arginine 80, arginine 105, and 132 to 140 (DPMLATGGS) contribute to the 5-phospho-alpha-D-ribose 1-diphosphate site. Residues isoleucine 195 and 200–202 (GDA) each bind uracil. Aspartate 201 provides a ligand contact to 5-phospho-alpha-D-ribose 1-diphosphate.

This sequence belongs to the UPRTase family. Requires Mg(2+) as cofactor.

The enzyme catalyses UMP + diphosphate = 5-phospho-alpha-D-ribose 1-diphosphate + uracil. It functions in the pathway pyrimidine metabolism; UMP biosynthesis via salvage pathway; UMP from uracil: step 1/1. With respect to regulation, allosterically activated by GTP. In terms of biological role, catalyzes the conversion of uracil and 5-phospho-alpha-D-ribose 1-diphosphate (PRPP) to UMP and diphosphate. The chain is Uracil phosphoribosyltransferase from Deinococcus radiodurans (strain ATCC 13939 / DSM 20539 / JCM 16871 / CCUG 27074 / LMG 4051 / NBRC 15346 / NCIMB 9279 / VKM B-1422 / R1).